A 414-amino-acid chain; its full sequence is Multifunctional CCA protein (414 aa).

ATP-binding residues include Gly-8 and Arg-11. The CTP site is built by Gly-8 and Arg-11. Asp-21 and Asp-23 together coordinate Mg(2+). ATP-binding residues include Arg-91, Arg-137, and Arg-140. The CTP site is built by Arg-91, Arg-137, and Arg-140. Positions 228–329 (TGIHTLMVLE…VKLFDKGDFW (102 aa)) constitute an HD domain.

This sequence belongs to the tRNA nucleotidyltransferase/poly(A) polymerase family. Bacterial CCA-adding enzyme type 1 subfamily. In terms of assembly, monomer. Can also form homodimers and oligomers. It depends on Mg(2+) as a cofactor. Ni(2+) is required as a cofactor.

It catalyses the reaction a tRNA precursor + 2 CTP + ATP = a tRNA with a 3' CCA end + 3 diphosphate. The enzyme catalyses a tRNA with a 3' CCA end + 2 CTP + ATP = a tRNA with a 3' CCACCA end + 3 diphosphate. Its function is as follows. Catalyzes the addition and repair of the essential 3'-terminal CCA sequence in tRNAs without using a nucleic acid template. Adds these three nucleotides in the order of C, C, and A to the tRNA nucleotide-73, using CTP and ATP as substrates and producing inorganic pyrophosphate. tRNA 3'-terminal CCA addition is required both for tRNA processing and repair. Also involved in tRNA surveillance by mediating tandem CCA addition to generate a CCACCA at the 3' terminus of unstable tRNAs. While stable tRNAs receive only 3'-terminal CCA, unstable tRNAs are marked with CCACCA and rapidly degraded. This is Multifunctional CCA protein from Shewanella frigidimarina (strain NCIMB 400).